The primary structure comprises 316 residues: Coproporphyrin III ferrochelatase (316 aa).

Residues Tyr13, Arg30, 46-47, Ser54, and Tyr125 each bind Fe-coproporphyrin III; that span reads RY. Fe(2+)-binding residues include His183 and Glu264.

The protein belongs to the ferrochelatase family.

The protein resides in the cytoplasm. It carries out the reaction Fe-coproporphyrin III + 2 H(+) = coproporphyrin III + Fe(2+). It functions in the pathway porphyrin-containing compound metabolism; protoheme biosynthesis. Its function is as follows. Involved in coproporphyrin-dependent heme b biosynthesis. Catalyzes the insertion of ferrous iron into coproporphyrin III to form Fe-coproporphyrin III. This Geobacillus kaustophilus (strain HTA426) protein is Coproporphyrin III ferrochelatase.